We begin with the raw amino-acid sequence, 2271 residues long: Serine-rich adhesin for platelets (2271 aa).

The signal sequence occupies residues 1 to 89 (MSKRQKAFHD…VNMLHDQQAF (89 aa)). The segment at 90–230 (AASDAPLTSE…KTSTTSTSTA (141 aa)) is serine-rich repeat region 1, SRR1. Positions 100–111 (LNTQSETVGNQN) are enriched in polar residues. 3 disordered regions span residues 100-229 (LNTQ…STST), 751-791 (NSMS…VVST), and 806-2243 (SVSA…GLLG). Low complexity predominate over residues 112-128 (STTIEASTSTADSTSVT). Over residues 129–140 (KNSSSVQTSNSD) the composition is skewed to polar residues. The span at 150–229 (VTSTTNSTSN…NKTSTTSTST (80 aa)) shows a compositional bias: low complexity. Residues 231–751 (PVKLRTFSRL…TTFKYEVTRN (521 aa)) form a non-repeat region (NRR) region. Low complexity-rich tracts occupy residues 752 to 791 (SMSD…VVST), 806 to 1392 (SVSA…LSLS), and 1402 to 2214 (SNSA…ATSE). A serine-rich repeat region 2, SRR2 region spans residues 752–2232 (SMSDSVSTSG…AQSEKRLPDT (1481 aa)). An LPXTG sorting signal motif is present at residues 2229–2233 (LPDTG). A Pentaglycyl murein peptidoglycan amidated threonine modification is found at T2232. Residues 2233–2271 (GDSIKQNGLLGGVMTLLVGLGLMKRKKKKDENDQDDSQA) constitute a propeptide, removed by sortase.

This sequence belongs to the serine-rich repeat protein (SRRP) family. Post-translationally, proteolytically cleaved by a metalloprotease. In terms of processing, glycosylated. It is probable that most of the Ser residues in SSR1 and SSR2 are O-GlcNAcylated. Sequential glycosylation by sugar transferases are able to generate complex sugar polymorphisms.

The protein localises to the secreted. It is found in the cell wall. Mediates binding to human platelets, possibly through a receptor-ligand interaction. Probably associated with virulence in endovascular infection. This is Serine-rich adhesin for platelets (sraP) from Staphylococcus aureus (strain USA300).